Here is a 398-residue protein sequence, read N- to C-terminus: 1-deoxy-D-xylulose 5-phosphate reductoisomerase (398 aa).

Residues T11, G12, S13, I14, R38, N39, and N125 each coordinate NADPH. A 1-deoxy-D-xylulose 5-phosphate-binding site is contributed by K126. E127 contributes to the NADPH binding site. D151 contacts Mn(2+). 1-deoxy-D-xylulose 5-phosphate-binding residues include S152, E153, S179, and H202. E153 provides a ligand contact to Mn(2+). G208 is an NADPH binding site. 4 residues coordinate 1-deoxy-D-xylulose 5-phosphate: S215, N220, K221, and E224. E224 contacts Mn(2+).

This sequence belongs to the DXR family. Requires Mg(2+) as cofactor. It depends on Mn(2+) as a cofactor.

It carries out the reaction 2-C-methyl-D-erythritol 4-phosphate + NADP(+) = 1-deoxy-D-xylulose 5-phosphate + NADPH + H(+). Its pathway is isoprenoid biosynthesis; isopentenyl diphosphate biosynthesis via DXP pathway; isopentenyl diphosphate from 1-deoxy-D-xylulose 5-phosphate: step 1/6. Catalyzes the NADPH-dependent rearrangement and reduction of 1-deoxy-D-xylulose-5-phosphate (DXP) to 2-C-methyl-D-erythritol 4-phosphate (MEP). The protein is 1-deoxy-D-xylulose 5-phosphate reductoisomerase of Burkholderia cenocepacia (strain HI2424).